The chain runs to 152 residues: 3-hydroxyacyl-[acyl-carrier-protein] dehydratase FabZ (152 aa).

Residue H57 is part of the active site.

This sequence belongs to the thioester dehydratase family. FabZ subfamily.

Its subcellular location is the cytoplasm. It carries out the reaction a (3R)-hydroxyacyl-[ACP] = a (2E)-enoyl-[ACP] + H2O. Involved in unsaturated fatty acids biosynthesis. Catalyzes the dehydration of short chain beta-hydroxyacyl-ACPs and long chain saturated and unsaturated beta-hydroxyacyl-ACPs. The protein is 3-hydroxyacyl-[acyl-carrier-protein] dehydratase FabZ of Pasteurella multocida (strain Pm70).